A 726-amino-acid polypeptide reads, in one-letter code: Dipeptidyl-peptidase 5 (726 aa).

Residues 1–19 form the signal peptide; the sequence is MAPAKWLIASLAFASTGLA. 2 N-linked (GlcNAc...) asparagine glycosylation sites follow: Asn-96 and Asn-252. The interval 268 to 292 is disordered; it reads VAEPINKRNGPRTPHGIEGASSSPV. Asn-485 carries N-linked (GlcNAc...) asparagine glycosylation. Catalysis depends on Ser-558, which acts as the Charge relay system. N-linked (GlcNAc...) asparagine glycosylation is present at Asn-605. Active-site charge relay system residues include Asp-641 and His-673. Asn-699 is a glycosylation site (N-linked (GlcNAc...) asparagine).

It belongs to the peptidase S9C family.

The protein resides in the secreted. In terms of biological role, extracellular dipeptidyl-peptidase which removes N-terminal dipeptides sequentially from polypeptides having unsubstituted N-termini. Contributes to pathogenicity. This is Dipeptidyl-peptidase 5 (DPP5) from Arthroderma otae (Microsporum canis).